Reading from the N-terminus, the 430-residue chain is Asparagine--tRNA ligase (430 aa).

Belongs to the class-II aminoacyl-tRNA synthetase family. Homodimer.

The protein localises to the cytoplasm. It carries out the reaction tRNA(Asn) + L-asparagine + ATP = L-asparaginyl-tRNA(Asn) + AMP + diphosphate + H(+). The sequence is that of Asparagine--tRNA ligase from Staphylococcus saprophyticus subsp. saprophyticus (strain ATCC 15305 / DSM 20229 / NCIMB 8711 / NCTC 7292 / S-41).